We begin with the raw amino-acid sequence, 556 residues long: Phenylalanine--tRNA ligase beta subunit (556 aa).

Residues 274 to 349 (HEPEEMEVDL…ITLGLNKIGY (76 aa)) form the B5 domain. Residues aspartate 327, aspartate 333, glutamate 336, and glutamate 337 each contribute to the Mg(2+) site.

This sequence belongs to the phenylalanyl-tRNA synthetase beta subunit family. Type 2 subfamily. As to quaternary structure, tetramer of two alpha and two beta subunits. Mg(2+) is required as a cofactor.

The protein localises to the cytoplasm. The enzyme catalyses tRNA(Phe) + L-phenylalanine + ATP = L-phenylalanyl-tRNA(Phe) + AMP + diphosphate + H(+). The sequence is that of Phenylalanine--tRNA ligase beta subunit from Korarchaeum cryptofilum (strain OPF8).